The sequence spans 1460 residues: CLIP-associating protein 1-A (1460 aa).

HEAT repeat units follow at residues 87 to 124 (TQLG…QASN) and 163 to 200 (LTLS…HVGE). The interval 237 to 293 (SDKNFDDEDSVDGNRPSSASSSASSKAPQTARRGVSLGTARRPGPSSAAAKTGGTAK) is disordered. The segment covering 279–293 (PGPSSAAAKTGGTAK) has biased composition (low complexity). HEAT repeat units lie at residues 407 to 442 (HGAE…IRHT) and 443 to 479 (HVPR…EWQT). 3 disordered regions span residues 545–605 (SDSI…IDVN), 640–733 (IRTR…RFGI), and 778–800 (PYGM…ERSY). The span at 550 to 569 (SLPQSDRSSSSSQESLNRPL) shows a compositional bias: low complexity. Over residues 571 to 597 (TKRSPTGSTVSRASSTTSKSTPGSLQR) the composition is skewed to polar residues. A compositionally biased stretch (low complexity) spans 645 to 659 (QSSGSTTSTASTPAD). 2 stretches are compositionally biased toward polar residues: residues 669 to 681 (VSQS…SNSP) and 715 to 724 (QGCSRETSPS). The span at 789 to 800 (SDASSACSERSY) shows a compositional bias: low complexity. The HEAT 5 repeat unit spans residues 942 to 979 (FIVDQTQTPNLKVKVAILKYIESLARQMDPTDFVNSSE). The disordered stretch occupies residues 1041–1084 (LKNSSNSSMGSPSNTIGRTPSRHSSSRASPLTSPTNCSHGGLSP). Low complexity predominate over residues 1042–1054 (KNSSNSSMGSPSN). A compositionally biased stretch (polar residues) spans 1066-1078 (SRASPLTSPTNCS). 2 HEAT repeats span residues 1272 to 1309 (LLLE…YAEL) and 1390 to 1427 (GLLQ…YLAQ).

This sequence belongs to the CLASP family.

It is found in the cytoplasm. The protein resides in the cytoskeleton. Its subcellular location is the microtubule organizing center. It localises to the centrosome. The protein localises to the chromosome. It is found in the centromere. The protein resides in the kinetochore. Its subcellular location is the spindle. It localises to the golgi apparatus. The protein localises to the trans-Golgi network. In terms of biological role, microtubule plus-end tracking protein that promotes the stabilization of dynamic microtubules during anaphase. Plays a crucial role in chromatin-induced microtubule formation. May also act at microtubule minus ends. May be involved in the nucleation of noncentrosomal microtubules originating from the trans-Golgi network (TGN). In Xenopus laevis (African clawed frog), this protein is CLIP-associating protein 1-A (clasp1-a).